The primary structure comprises 403 residues: Enoyl-[acyl-carrier-protein] reductase [NADH] (403 aa).

Residues 49-54, 75-76, 112-113, and 141-142 contribute to the NAD(+) site; these read GASSGY, FE, DA, and LA. Tyr227 contacts substrate. Catalysis depends on Tyr237, which acts as the Proton donor. NAD(+) contacts are provided by residues Lys246 and 276 to 278; that span reads VVT.

This sequence belongs to the TER reductase family. In terms of assembly, monomer.

The catalysed reaction is a 2,3-saturated acyl-[ACP] + NAD(+) = a (2E)-enoyl-[ACP] + NADH + H(+). It functions in the pathway lipid metabolism; fatty acid biosynthesis. Involved in the final reduction of the elongation cycle of fatty acid synthesis (FAS II). Catalyzes the reduction of a carbon-carbon double bond in an enoyl moiety that is covalently linked to an acyl carrier protein (ACP). This is Enoyl-[acyl-carrier-protein] reductase [NADH] from Pseudomonas putida (strain GB-1).